Reading from the N-terminus, the 870-residue chain is Leucine--tRNA ligase (870 aa).

The short motif at 42-52 (PYPSGKLHMGH) is the 'HIGH' region element. A 'KMSKS' region motif is present at residues 629–633 (KMSKS). Position 632 (lysine 632) interacts with ATP.

This sequence belongs to the class-I aminoacyl-tRNA synthetase family.

The protein resides in the cytoplasm. The catalysed reaction is tRNA(Leu) + L-leucine + ATP = L-leucyl-tRNA(Leu) + AMP + diphosphate. The chain is Leucine--tRNA ligase from Dechloromonas aromatica (strain RCB).